The primary structure comprises 449 residues: Phosphoglucosamine mutase (449 aa).

The Phosphoserine intermediate role is filled by Ser-100. Positions 100, 241, 243, and 245 each coordinate Mg(2+). Ser-100 is subject to Phosphoserine.

This sequence belongs to the phosphohexose mutase family. The cofactor is Mg(2+). Post-translationally, activated by phosphorylation.

The enzyme catalyses alpha-D-glucosamine 1-phosphate = D-glucosamine 6-phosphate. Its function is as follows. Catalyzes the conversion of glucosamine-6-phosphate to glucosamine-1-phosphate. This chain is Phosphoglucosamine mutase, found in Clostridium kluyveri (strain NBRC 12016).